The following is a 500-amino-acid chain: Cytochrome P450 monooxygenase 103 (500 aa).

Helical transmembrane passes span 1–21 (MAST…YLLR) and 26–46 (PLYA…IGAL). The N-linked (GlcNAc...) asparagine glycan is linked to Asn-374. Cys-441 lines the heme pocket.

This sequence belongs to the cytochrome P450 family. Requires heme as cofactor.

Its subcellular location is the membrane. The protein operates within secondary metabolite biosynthesis. Cytochrome P450 monooxygenase that is able to use testosterone as a substrate for oxidation. The sequence is that of Cytochrome P450 monooxygenase 103 from Postia placenta (strain ATCC 44394 / Madison 698-R) (Brown rot fungus).